Here is a 309-residue protein sequence, read N- to C-terminus: Porphobilinogen deaminase (309 aa).

Position 241 is an S-(dipyrrolylmethanemethyl)cysteine (Cys241).

This sequence belongs to the HMBS family. In terms of assembly, monomer. Dipyrromethane is required as a cofactor.

It catalyses the reaction 4 porphobilinogen + H2O = hydroxymethylbilane + 4 NH4(+). It functions in the pathway porphyrin-containing compound metabolism; protoporphyrin-IX biosynthesis; coproporphyrinogen-III from 5-aminolevulinate: step 2/4. Functionally, tetrapolymerization of the monopyrrole PBG into the hydroxymethylbilane pre-uroporphyrinogen in several discrete steps. This is Porphobilinogen deaminase from Bacillus cereus (strain AH187).